A 318-amino-acid chain; its full sequence is Basic leucine zipper (bZIP) transcription factor atfB (318 aa).

Positions 114–157 (FNSSPPEYAPPKHRSSLSEQSQTDGYGVSTRRRKASAIDQCEQQ) are disordered. The basic motif stretch occupies residues 160–199 (REKREKFLERNRLAASKCRQKKKEHTKLLETRFREVSNKK). The bZIP domain occupies 160–223 (REKREKFLER…LNLKNEMLRH (64 aa)). The segment at 202–216 (LESEIEHLRSEVLNL) is leucine-zipper. Residues 275–301 (DGPMQLPSEMGSPLDQRRDSEQSIMTE) are disordered.

The protein belongs to the bZIP family. ATF subfamily.

It is found in the nucleus. Transcription factor that acts as a key player in the regulatory circuit that integrates secondary metabolism and cellular response to oxidative stress. Regulates the genes involved in development and stress response through direct binding to their promoters. In Aspergillus flavus (strain ATCC 200026 / FGSC A1120 / IAM 13836 / NRRL 3357 / JCM 12722 / SRRC 167), this protein is Basic leucine zipper (bZIP) transcription factor atfB.